Here is a 516-residue protein sequence, read N- to C-terminus: MQRRDFLKYSVALGVASALPLWSRAVFAAERPTLPIPDLLTTDARNRIQLTIGAGQSTFGEKTATTWGYNGNLLGPAVKLQRGKAVTVDIYNQLTEETTLHWHGLEVPGEVDGGPQGIIPPGGKRSVTLNVDQPAATCWFHPHQHGKTGRQVAMGLAGLVVIEDDEILKLMLPKQWGIDDVPVIVQDKKFSADGQIDYQLDVMTAAVGWFGDTLLTNGAIYPQHAAPRGWLRLRLLNGCNARSLNFATSDNRPLYVIASDGGLLPEPVKVNELPVLMGERFEVLVEVNDNKPFDLVTLPVSQMGMAIAPFDKPHPVMRIQPIAISASGALPDTLSSLPALPSLEGLTVRKLQLSMDPMLDMMGMQMLMEKYGDQAMVGMDHSQMMGHMGHGNMNHMNHGGKFDFHHANKINGQAFDMNKPMFAAAKGQYERWVISGVGDMMLHPFHIHGTQFRILSENGKPPAAHRAGWKDTVKVEGNVSEVLVKFNHDAPKERAYMAHCHLLEHEDTGMMLGFTV.

The tat-type signal signal peptide spans methionine 1–alanine 28. Plastocyanin-like domains lie at glycine 55–aspartate 165, proline 227–proline 292, and glycine 399–valine 516. Cu cation is bound by residues histidine 101, histidine 103, histidine 141, and histidine 143. Cu cation contacts are provided by histidine 443, histidine 446, histidine 448, histidine 499, cysteine 500, histidine 501, and histidine 505.

The protein belongs to the multicopper oxidase family. In terms of assembly, monomer. The cofactor is Cu cation. Post-translationally, predicted to be exported by the Tat system. The position of the signal peptide cleavage has not been experimentally proven.

It localises to the periplasm. The catalysed reaction is 4 Cu(+) + O2 + 4 H(+) = 4 Cu(2+) + 2 H2O. Multicopper oxidase involved in copper homeostasis and copper tolerance under aerobic conditions. Is responsible for the oxidation of Cu(+) to the less harmful Cu(2+) in the periplasm, thereby preventing Cu(+) from entering the cytoplasm. The sequence is that of Multicopper oxidase CueO (cueO) from Escherichia coli O157:H7.